Here is a 222-residue protein sequence, read N- to C-terminus: Acyl-protein thioesterase 1 homolog 2 (222 aa).

Residues Ser-116, Asp-169, and His-202 each act as charge relay system in the active site.

It belongs to the AB hydrolase superfamily. AB hydrolase 2 family.

Its subcellular location is the cytoplasm. The protein resides in the nucleus. It catalyses the reaction S-hexadecanoyl-L-cysteinyl-[protein] + H2O = L-cysteinyl-[protein] + hexadecanoate + H(+). In terms of biological role, hydrolyzes fatty acids from S-acylated cysteine residues in proteins with a strong preference for palmitoylated G-alpha proteins over other acyl substrates. Mediates the deacylation of G-alpha proteins such as GPA1 in vivo, but has weak or no activity toward palmitoylated Ras proteins. Has weak lysophospholipase activity in vitro; however such activity may not exist in vivo. This Dictyostelium discoideum (Social amoeba) protein is Acyl-protein thioesterase 1 homolog 2.